Reading from the N-terminus, the 281-residue chain is Release factor glutamine methyltransferase (281 aa).

S-adenosyl-L-methionine contacts are provided by E141 and N185. 185–188 (NPPY) serves as a coordination point for substrate.

Belongs to the protein N5-glutamine methyltransferase family. PrmC subfamily.

The enzyme catalyses L-glutaminyl-[peptide chain release factor] + S-adenosyl-L-methionine = N(5)-methyl-L-glutaminyl-[peptide chain release factor] + S-adenosyl-L-homocysteine + H(+). In terms of biological role, methylates the class 1 translation termination release factors RF1/PrfA and RF2/PrfB on the glutamine residue of the universally conserved GGQ motif. This is Release factor glutamine methyltransferase from Mycolicibacterium smegmatis (strain ATCC 700084 / mc(2)155) (Mycobacterium smegmatis).